Here is a 373-residue protein sequence, read N- to C-terminus: Probable tRNA sulfurtransferase (373 aa).

One can recognise a THUMP domain in the interval 54–158; it reads NKNIEELSKV…NDVAYFYYKI (105 aa). ATP-binding positions include 176-177, 201-202, Lys-256, Gly-278, and Gln-287; these read LF and NF.

It belongs to the ThiI family.

The protein resides in the cytoplasm. The enzyme catalyses [ThiI sulfur-carrier protein]-S-sulfanyl-L-cysteine + a uridine in tRNA + 2 reduced [2Fe-2S]-[ferredoxin] + ATP + H(+) = [ThiI sulfur-carrier protein]-L-cysteine + a 4-thiouridine in tRNA + 2 oxidized [2Fe-2S]-[ferredoxin] + AMP + diphosphate. The catalysed reaction is [ThiS sulfur-carrier protein]-C-terminal Gly-Gly-AMP + S-sulfanyl-L-cysteinyl-[cysteine desulfurase] + AH2 = [ThiS sulfur-carrier protein]-C-terminal-Gly-aminoethanethioate + L-cysteinyl-[cysteine desulfurase] + A + AMP + 2 H(+). Its pathway is cofactor biosynthesis; thiamine diphosphate biosynthesis. In terms of biological role, catalyzes the ATP-dependent transfer of a sulfur to tRNA to produce 4-thiouridine in position 8 of tRNAs, which functions as a near-UV photosensor. Also catalyzes the transfer of sulfur to the sulfur carrier protein ThiS, forming ThiS-thiocarboxylate. This is a step in the synthesis of thiazole, in the thiamine biosynthesis pathway. The sulfur is donated as persulfide by IscS. This Saccharolobus islandicus (strain Y.N.15.51 / Yellowstone #2) (Sulfolobus islandicus) protein is Probable tRNA sulfurtransferase.